The following is a 173-amino-acid chain: Large ribosomal subunit protein uL10 (173 aa).

It belongs to the universal ribosomal protein uL10 family. In terms of assembly, part of the ribosomal stalk of the 50S ribosomal subunit. The N-terminus interacts with L11 and the large rRNA to form the base of the stalk. The C-terminus forms an elongated spine to which L12 dimers bind in a sequential fashion forming a multimeric L10(L12)X complex.

Its function is as follows. Forms part of the ribosomal stalk, playing a central role in the interaction of the ribosome with GTP-bound translation factors. The chain is Large ribosomal subunit protein uL10 from Beutenbergia cavernae (strain ATCC BAA-8 / DSM 12333 / CCUG 43141 / JCM 11478 / NBRC 16432 / NCIMB 13614 / HKI 0122).